A 158-amino-acid chain; its full sequence is Ribosomal RNA large subunit methyltransferase H (158 aa).

S-adenosyl-L-methionine-binding positions include leucine 74, glycine 105, and 124 to 129; that span reads LGPLTL.

It belongs to the RNA methyltransferase RlmH family. Homodimer.

The protein localises to the cytoplasm. It catalyses the reaction pseudouridine(1915) in 23S rRNA + S-adenosyl-L-methionine = N(3)-methylpseudouridine(1915) in 23S rRNA + S-adenosyl-L-homocysteine + H(+). Specifically methylates the pseudouridine at position 1915 (m3Psi1915) in 23S rRNA. This chain is Ribosomal RNA large subunit methyltransferase H, found in Xylella fastidiosa (strain Temecula1 / ATCC 700964).